A 612-amino-acid polypeptide reads, in one-letter code: 1-deoxy-D-xylulose-5-phosphate synthase (612 aa).

Thiamine diphosphate is bound by residues H77 and 118 to 120 (GHS). A Mg(2+)-binding site is contributed by D147. Residues 148–149 (AA), N176, Y288, and E365 each bind thiamine diphosphate. N176 serves as a coordination point for Mg(2+).

This sequence belongs to the transketolase family. DXPS subfamily. Homodimer. Requires Mg(2+) as cofactor. Thiamine diphosphate serves as cofactor.

It catalyses the reaction D-glyceraldehyde 3-phosphate + pyruvate + H(+) = 1-deoxy-D-xylulose 5-phosphate + CO2. The protein operates within metabolic intermediate biosynthesis; 1-deoxy-D-xylulose 5-phosphate biosynthesis; 1-deoxy-D-xylulose 5-phosphate from D-glyceraldehyde 3-phosphate and pyruvate: step 1/1. Its function is as follows. Catalyzes the acyloin condensation reaction between C atoms 2 and 3 of pyruvate and glyceraldehyde 3-phosphate to yield 1-deoxy-D-xylulose-5-phosphate (DXP). The protein is 1-deoxy-D-xylulose-5-phosphate synthase of Malacoplasma penetrans (strain HF-2) (Mycoplasma penetrans).